Consider the following 352-residue polypeptide: tRNA pseudouridine synthase D (352 aa).

Aspartate 78 acts as the Nucleophile in catalysis. One can recognise a TRUD domain in the interval 153–299 (GVPNYYGEQR…LDQDRRPLLL (147 aa)).

It belongs to the pseudouridine synthase TruD family.

It catalyses the reaction uridine(13) in tRNA = pseudouridine(13) in tRNA. Responsible for synthesis of pseudouridine from uracil-13 in transfer RNAs. The chain is tRNA pseudouridine synthase D from Aeromonas salmonicida (strain A449).